A 180-amino-acid chain; its full sequence is Translation initiation factor IF-3 (180 aa).

Belongs to the IF-3 family. In terms of assembly, monomer.

It localises to the cytoplasm. IF-3 binds to the 30S ribosomal subunit and shifts the equilibrium between 70S ribosomes and their 50S and 30S subunits in favor of the free subunits, thus enhancing the availability of 30S subunits on which protein synthesis initiation begins. The polypeptide is Translation initiation factor IF-3 (Escherichia coli (strain K12 / MC4100 / BW2952)).